Here is a 65-residue protein sequence, read N- to C-terminus: Photosystem II reaction center protein J (65 aa).

A compositionally biased stretch (basic and acidic residues) spans 1–17 (MSTKLKGPDGRIPDRLP). The interval 1 to 20 (MSTKLKGPDGRIPDRLPDGT) is disordered. Residues 36-56 (LWLVATVGGMAVLSVLGLFFF) traverse the membrane as a helical segment.

The protein belongs to the PsbJ family. PSII is composed of 1 copy each of membrane proteins PsbA, PsbB, PsbC, PsbD, PsbE, PsbF, PsbH, PsbI, PsbJ, PsbK, PsbL, PsbM, PsbT, PsbX, PsbY, Psb30/Ycf12, peripheral proteins PsbO, CyanoQ (PsbQ), PsbU, PsbV and a large number of cofactors. It forms dimeric complexes.

Its subcellular location is the cellular thylakoid membrane. Its function is as follows. One of the components of the core complex of photosystem II (PSII). PSII is a light-driven water:plastoquinone oxidoreductase that uses light energy to abstract electrons from H(2)O, generating O(2) and a proton gradient subsequently used for ATP formation. It consists of a core antenna complex that captures photons, and an electron transfer chain that converts photonic excitation into a charge separation. This is Photosystem II reaction center protein J from Prochlorococcus marinus (strain MIT 9303).